A 102-amino-acid chain; its full sequence is Small ribosomal subunit protein uS10 (102 aa).

The protein belongs to the universal ribosomal protein uS10 family. Part of the 30S ribosomal subunit.

In terms of biological role, involved in the binding of tRNA to the ribosomes. In Bacillus anthracis (strain A0248), this protein is Small ribosomal subunit protein uS10.